Here is a 257-residue protein sequence, read N- to C-terminus: MAPKKGVKVAAKKKTAEKVSNPLFERRPKQFGIGGALPPKKDLSRYIKWPKSIRLQRQKRILKQRLKVPPALNQFTKTLDKNLATSLFKVLLKYRPEDKAAKKERLVKKAQAEAEGKPSESKKPIVVKYGLNHVTYLIEQNKAQLVVIAHDVDPIELVVWLPALCRKMEVPYCIVKGKSRLGAVVHQKTASCLCLTTVKNEDKLEFSKILEAIKANFNDKYEEYRKKWGGGIMGSKSQAKTKAKERVIAKEAAQRMN.

It belongs to the eukaryotic ribosomal protein eL8 family.

This is Large ribosomal subunit protein eL8z (RPL7AA) from Arabidopsis thaliana (Mouse-ear cress).